A 434-amino-acid polypeptide reads, in one-letter code: D-amino acid dehydrogenase (434 aa).

An FAD-binding site is contributed by 3–17 (VVILGSGVVGVTSAW).

This sequence belongs to the DadA oxidoreductase family. The cofactor is FAD.

The enzyme catalyses a D-alpha-amino acid + A + H2O = a 2-oxocarboxylate + AH2 + NH4(+). The protein operates within amino-acid degradation; D-alanine degradation; NH(3) and pyruvate from D-alanine: step 1/1. Oxidative deamination of D-amino acids. The polypeptide is D-amino acid dehydrogenase (Yersinia pseudotuberculosis serotype O:3 (strain YPIII)).